Reading from the N-terminus, the 546-residue chain is uncharacterized protein (546 aa).

5 consecutive transmembrane segments (helical) span residues 4 to 23 (ILLE…GYPL), 30 to 47 (GSSL…AMGS), 57 to 79 (IVYV…PAFV), 91 to 113 (ALII…LLGF), and 155 to 177 (PVVG…ISLV). 2 consecutive RCK C-terminal domains span residues 189–274 (GKRL…FLGE) and 275–359 (VSEE…FFGD). Transmembrane regions (helical) follow at residues 372 to 394 (FSLG…GGIT), 399 to 421 (FAGG…SMVW), 434 to 456 (IGLV…TTLA), 460 to 482 (GLAI…LWIG), 489 to 511 (PMSI…GYAL), and 521 to 543 (IGYA…ILLT).

This sequence belongs to the AAE transporter (TC 2.A.81) family.

The protein resides in the cell membrane. This is an uncharacterized protein from Geobacter sulfurreducens (strain ATCC 51573 / DSM 12127 / PCA).